We begin with the raw amino-acid sequence, 35 residues long: Mu-theraphotoxin-Ca2a (35 aa).

Disulfide bonds link cysteine 2-cysteine 17, cysteine 9-cysteine 24, and cysteine 16-cysteine 31.

Belongs to the neurotoxin 10 (Hwtx-1) family. 10 (haplotoxin-1) subfamily. Expressed by the venom gland.

Its subcellular location is the secreted. Its function is as follows. Potently inhibits Nav1.7/SCN9A (IC(50)=98.1 nM), and moderately inhibits Nav1.2/SCN2A (IC(50)=216.3 nM), Nav1.6/SCN8A (IC(50)=313.6 nM), and Nav1.3/SCN3A (IC(50)=491.3 nM). Hyperpolarizes the slow inactivation, but does not alter the voltage-dependent activation or fast inactivation of Nav1.7/SCN9A. Binds with Nav1.7/SCN9A at the extracellular S3-S4 linker of domain II (site 4). In vivo, exhibits dose-dependent analgesic efficacy by reducing pain responses in rodent models of formalin-induced paw licking, hot plate test, and acetic acid-induced writhing. The protein is Mu-theraphotoxin-Ca2a of Cyriopagopus albostriatus (Cambodian tiger tarantula).